Consider the following 194-residue polypeptide: dITP/XTP pyrophosphatase (194 aa).

Threonine 9–lysine 14 contributes to the substrate binding site. Mg(2+) is bound by residues aspartate 40 and aspartate 69. Residue aspartate 69 is the Proton acceptor of the active site. Substrate-binding positions include serine 70, phenylalanine 152–aspartate 155, lysine 175, and histidine 180–arginine 181.

This sequence belongs to the HAM1 NTPase family. As to quaternary structure, homodimer. It depends on Mg(2+) as a cofactor.

It carries out the reaction XTP + H2O = XMP + diphosphate + H(+). The catalysed reaction is dITP + H2O = dIMP + diphosphate + H(+). The enzyme catalyses ITP + H2O = IMP + diphosphate + H(+). Functionally, pyrophosphatase that catalyzes the hydrolysis of nucleoside triphosphates to their monophosphate derivatives, with a high preference for the non-canonical purine nucleotides XTP (xanthosine triphosphate), dITP (deoxyinosine triphosphate) and ITP. Seems to function as a house-cleaning enzyme that removes non-canonical purine nucleotides from the nucleotide pool, thus preventing their incorporation into DNA/RNA and avoiding chromosomal lesions. The polypeptide is dITP/XTP pyrophosphatase (Caulobacter vibrioides (strain ATCC 19089 / CIP 103742 / CB 15) (Caulobacter crescentus)).